Consider the following 575-residue polypeptide: Physarolisin (575 aa).

Positions 1–18 are cleaved as a signal peptide; the sequence is MRLLSLLFLLGLATLSFA. Residues 19–173 constitute a propeptide, removed in mature form; it reads VRSQWAQQGR…SIKNARTQVG (155 aa). Residues 179 to 574 enclose the Peptidase S53 domain; that stretch reads YIVPYVIFDL…SKLLAFVQTL (396 aa). Asn-200 is a glycosylation site (N-linked (GlcNAc...) asparagine). Residues Glu-248 and Asp-252 each act as charge relay system in the active site. 4 N-linked (GlcNAc...) asparagine glycosylation sites follow: Asn-262, Asn-307, Asn-380, and Asn-453. Ser-484 acts as the Charge relay system in catalysis. The Ca(2+) site is built by Asp-529, Ile-530, Gly-552, and Asp-554.

The cofactor is Ca(2+). Post-translationally, autocatalytically processed. In terms of processing, N-glycosylated.

It catalyses the reaction Milk clotting activity. Preferential cleavage of 8-Gly-|-Ser-9 in B chain of insulin most rapidly, followed by 11-Leu-|-Val-12, 19-Cys(SO(3)H)-|-Gly and 24-Phe-|-Phe-25. No action on Ac-Phe-Tyr(I)2.. Its activity is regulated as follows. Inhibited by diisopropylfluorophosphate (DFP) and diazoacetyl-D,L-norleucine methyl ester (DAN). The chain is Physarolisin from Physarum polycephalum (Slime mold).